The sequence spans 246 residues: tRNA pseudouridine synthase A (246 aa).

The active-site Nucleophile is Asp53. Tyr111 contributes to the substrate binding site.

This sequence belongs to the tRNA pseudouridine synthase TruA family. In terms of assembly, homodimer.

The catalysed reaction is uridine(38/39/40) in tRNA = pseudouridine(38/39/40) in tRNA. Formation of pseudouridine at positions 38, 39 and 40 in the anticodon stem and loop of transfer RNAs. The sequence is that of tRNA pseudouridine synthase A from Lysinibacillus sphaericus (strain C3-41).